Here is a 252-residue protein sequence, read N- to C-terminus: Small ribosomal subunit protein uS3 (252 aa).

The 73-residue stretch at 39–111 (IRKLINNFAK…DVNLNVLEVK (73 aa)) folds into the KH type-2 domain. The segment at 226–252 (SQSSNNPNRRPRNFKGGNNNHVNAKKN) is disordered.

The protein belongs to the universal ribosomal protein uS3 family. In terms of assembly, part of the 30S ribosomal subunit. Forms a tight complex with proteins S10 and S14.

Binds the lower part of the 30S subunit head. Binds mRNA in the 70S ribosome, positioning it for translation. This Aster yellows witches'-broom phytoplasma (strain AYWB) protein is Small ribosomal subunit protein uS3.